A 372-amino-acid chain; its full sequence is Innexin shaking-B (372 aa).

Topologically, residues methionine 1–serine 21 are cytoplasmic. The helical transmembrane segment at isoleucine 22 to isoleucine 42 threads the bilayer. Topologically, residues threonine 43–tyrosine 110 are extracellular. Residues glutamine 111–tryptophan 131 traverse the membrane as a helical segment. Residues lysine 132–tyrosine 182 are Cytoplasmic-facing. The helical transmembrane segment at valine 183–phenylalanine 203 threads the bilayer. The Extracellular segment spans residues aspartate 204–lysine 267. Residues isoleucine 268 to isoleucine 288 traverse the membrane as a helical segment. Residues tyrosine 289–alanine 372 are Cytoplasmic-facing.

Belongs to the pannexin family. In terms of assembly, monomer (isoform Lethal). As to expression, isoform Neural is expressed in synapses of giant fibers (GF), in a large thoracic cell in location of postsynaptic target and optic lobe lamina and medulla. Isoform Lethal is expressed in embryonic mesodermal derivatives. During metamorphosis, both isoforms are dynamically expressed in pupal nervous system.

It localises to the cell membrane. Its subcellular location is the cell junction. It is found in the gap junction. Functionally, structural component of the gap junctions at electrical synapses in distal and mid-depth levels in the lamina. Isoform Lethal forms voltage sensitive intercellular channels through homotypic interactions. This Drosophila melanogaster (Fruit fly) protein is Innexin shaking-B (shakB).